A 239-amino-acid chain; its full sequence is Ribose-5-phosphate isomerase A (239 aa).

Residues 30 to 33 (SGST), 87 to 90 (DGAD), and 100 to 103 (KGGG) contribute to the substrate site. The active-site Proton acceptor is the E109. K127 contributes to the substrate binding site.

Belongs to the ribose 5-phosphate isomerase family. Homodimer.

It catalyses the reaction aldehydo-D-ribose 5-phosphate = D-ribulose 5-phosphate. It participates in carbohydrate degradation; pentose phosphate pathway; D-ribose 5-phosphate from D-ribulose 5-phosphate (non-oxidative stage): step 1/1. Its function is as follows. Catalyzes the reversible conversion of ribose-5-phosphate to ribulose 5-phosphate. The polypeptide is Ribose-5-phosphate isomerase A (Synechococcus sp. (strain CC9605)).